The following is a 113-amino-acid chain: Venom protein 184 (113 aa).

Residues 1–21 (MKTTLIFCILGIVIPTAVVSS) form the signal peptide.

Post-translationally, contains 3 disulfide bonds. In terms of tissue distribution, expressed by the venom gland.

It localises to the secreted. The polypeptide is Venom protein 184 (Lychas mucronatus (Chinese swimming scorpion)).